A 481-amino-acid polypeptide reads, in one-letter code: MITIEQVLEVLKKDHNFRDIINQEYYYYSWTGVTFDHLSYDSRDITPSTLFFAKGAGFKLEFLESAVQAGLGFYVAEKDYQVGIPAILVSDIKQAMSLVAQAFYQHPQDKLKLLAFTGTKGKTTASYFAFNILKQSHKPAMLSTMNTTLDGKTFFKSNLTTPESLDLFRMMAEAVSNGMTHLIMEVSSQAYLTKRVYGLTFDVGVFLNISPDHIGPIEHPTFEDYFYHKRLLLKNSQAVIVNSGMNHFDFVAEEVADKDHDFYGKDSENTVKHSSGFSFKAKGKLAGDYDIQLIGDFNQDNAMAAGLACLRLGASLEDIKKGIAQTSVPGRMEILTQANGAKVFVDYAHNGDSLDKLLQVVTDHQKGKISLILGAPGNKGESRRQDFGHVLNTYPEINVILSTDDPNKEDPLTICQEIASHINRKVRIIIDREEAIKTAMSETTGSSDALVIAGKGADAFQIVNGKRTDYAGDIEVAKKYL.

A UDP-N-acetyl-alpha-D-muramoyl-L-alanyl-D-glutamate-binding site is contributed by Ser-42. Residue 118–124 (GTKGKTT) participates in ATP binding. UDP-N-acetyl-alpha-D-muramoyl-L-alanyl-D-glutamate contacts are provided by residues Asn-158, 160 to 161 (TT), Ser-187, and Arg-195. Lys-229 bears the N6-carboxylysine mark. Positions 404–407 (DDPN) match the L-lysine recognition motif motif.

The protein belongs to the MurCDEF family. MurE subfamily. Carboxylation is probably crucial for Mg(2+) binding and, consequently, for the gamma-phosphate positioning of ATP.

It localises to the cytoplasm. The catalysed reaction is UDP-N-acetyl-alpha-D-muramoyl-L-alanyl-D-glutamate + L-lysine + ATP = UDP-N-acetyl-alpha-D-muramoyl-L-alanyl-gamma-D-glutamyl-L-lysine + ADP + phosphate + H(+). It functions in the pathway cell wall biogenesis; peptidoglycan biosynthesis. Catalyzes the addition of L-lysine to the nucleotide precursor UDP-N-acetylmuramoyl-L-alanyl-D-glutamate (UMAG) in the biosynthesis of bacterial cell-wall peptidoglycan. This Streptococcus thermophilus (strain ATCC BAA-491 / LMD-9) protein is UDP-N-acetylmuramoyl-L-alanyl-D-glutamate--L-lysine ligase.